Here is a 294-residue protein sequence, read N- to C-terminus: Bifunctional protein FolD (294 aa).

NADP(+)-binding positions include 166-168, S191, and I232; that span reads GRS.

The protein belongs to the tetrahydrofolate dehydrogenase/cyclohydrolase family. Homodimer.

The enzyme catalyses (6R)-5,10-methylene-5,6,7,8-tetrahydrofolate + NADP(+) = (6R)-5,10-methenyltetrahydrofolate + NADPH. The catalysed reaction is (6R)-5,10-methenyltetrahydrofolate + H2O = (6R)-10-formyltetrahydrofolate + H(+). It participates in one-carbon metabolism; tetrahydrofolate interconversion. Catalyzes the oxidation of 5,10-methylenetetrahydrofolate to 5,10-methenyltetrahydrofolate and then the hydrolysis of 5,10-methenyltetrahydrofolate to 10-formyltetrahydrofolate. This chain is Bifunctional protein FolD, found in Nitrobacter winogradskyi (strain ATCC 25391 / DSM 10237 / CIP 104748 / NCIMB 11846 / Nb-255).